Consider the following 377-residue polypeptide: Erythronate-4-phosphate dehydrogenase (377 aa).

Residues S45 and T67 each contribute to the substrate site. Residues 127-128, D147, and T176 each bind NAD(+); that span reads QV. The active site involves R209. NAD(+) is bound at residue D233. Residue E238 is part of the active site. Catalysis depends on H255, which acts as the Proton donor. NAD(+) is bound at residue G258. Y259 contacts substrate.

Belongs to the D-isomer specific 2-hydroxyacid dehydrogenase family. PdxB subfamily. As to quaternary structure, homodimer.

It is found in the cytoplasm. It catalyses the reaction 4-phospho-D-erythronate + NAD(+) = (R)-3-hydroxy-2-oxo-4-phosphooxybutanoate + NADH + H(+). Its pathway is cofactor biosynthesis; pyridoxine 5'-phosphate biosynthesis; pyridoxine 5'-phosphate from D-erythrose 4-phosphate: step 2/5. Catalyzes the oxidation of erythronate-4-phosphate to 3-hydroxy-2-oxo-4-phosphonooxybutanoate. The polypeptide is Erythronate-4-phosphate dehydrogenase (Vibrio atlanticus (strain LGP32) (Vibrio splendidus (strain Mel32))).